Reading from the N-terminus, the 145-residue chain is Cytochrome c-type biogenesis protein CcmE (145 aa).

The Cytoplasmic segment spans residues 1-7 (MKAKHQR). Residues 8 to 28 (LILAVAALCGVAGAGVLAASA) traverse the membrane as a helical; Signal-anchor for type II membrane protein segment. Residues 29-145 (LRDEAAYFRT…PKNMKAAVEG (117 aa)) lie on the Periplasmic side of the membrane. Heme contacts are provided by H123 and Y127.

This sequence belongs to the CcmE/CycJ family.

It is found in the cell inner membrane. Functionally, heme chaperone required for the biogenesis of c-type cytochromes. Transiently binds heme delivered by CcmC and transfers the heme to apo-cytochromes in a process facilitated by CcmF and CcmH. In Sphingopyxis alaskensis (strain DSM 13593 / LMG 18877 / RB2256) (Sphingomonas alaskensis), this protein is Cytochrome c-type biogenesis protein CcmE.